Consider the following 562-residue polypeptide: Protein FAM222B (562 aa).

2 stretches are compositionally biased toward low complexity: residues 155–167 (QQALQHAQTLAHA) and 183–201 (ALSHPQSLQQPQGLGHPQP). Disordered regions lie at residues 155-203 (QQAL…QPMA), 219-245 (LQHPHNPLLHGGRKMPDSDAPPNVTVS), and 537-562 (AHRAPGNRAPDPTESRSLHIQHPGYR).

This sequence belongs to the FAM222 family.

This is Protein FAM222B (FAM222B) from Homo sapiens (Human).